We begin with the raw amino-acid sequence, 316 residues long: 4-hydroxy-3-methylbut-2-enyl diphosphate reductase (316 aa).

Cysteine 12 provides a ligand contact to [4Fe-4S] cluster. (2E)-4-hydroxy-3-methylbut-2-enyl diphosphate contacts are provided by histidine 43 and histidine 81. Positions 43 and 81 each coordinate dimethylallyl diphosphate. Positions 43 and 81 each coordinate isopentenyl diphosphate. Position 103 (cysteine 103) interacts with [4Fe-4S] cluster. Residue histidine 131 coordinates (2E)-4-hydroxy-3-methylbut-2-enyl diphosphate. Histidine 131 serves as a coordination point for dimethylallyl diphosphate. An isopentenyl diphosphate-binding site is contributed by histidine 131. The Proton donor role is filled by glutamate 133. Threonine 170 contributes to the (2E)-4-hydroxy-3-methylbut-2-enyl diphosphate binding site. [4Fe-4S] cluster is bound at residue cysteine 198. (2E)-4-hydroxy-3-methylbut-2-enyl diphosphate contacts are provided by serine 226, asparagine 228, and serine 271. Dimethylallyl diphosphate is bound by residues serine 226, asparagine 228, and serine 271. Residues serine 226, asparagine 228, and serine 271 each coordinate isopentenyl diphosphate.

This sequence belongs to the IspH family. [4Fe-4S] cluster serves as cofactor.

It catalyses the reaction isopentenyl diphosphate + 2 oxidized [2Fe-2S]-[ferredoxin] + H2O = (2E)-4-hydroxy-3-methylbut-2-enyl diphosphate + 2 reduced [2Fe-2S]-[ferredoxin] + 2 H(+). The catalysed reaction is dimethylallyl diphosphate + 2 oxidized [2Fe-2S]-[ferredoxin] + H2O = (2E)-4-hydroxy-3-methylbut-2-enyl diphosphate + 2 reduced [2Fe-2S]-[ferredoxin] + 2 H(+). It functions in the pathway isoprenoid biosynthesis; dimethylallyl diphosphate biosynthesis; dimethylallyl diphosphate from (2E)-4-hydroxy-3-methylbutenyl diphosphate: step 1/1. It participates in isoprenoid biosynthesis; isopentenyl diphosphate biosynthesis via DXP pathway; isopentenyl diphosphate from 1-deoxy-D-xylulose 5-phosphate: step 6/6. Functionally, catalyzes the conversion of 1-hydroxy-2-methyl-2-(E)-butenyl 4-diphosphate (HMBPP) into a mixture of isopentenyl diphosphate (IPP) and dimethylallyl diphosphate (DMAPP). Acts in the terminal step of the DOXP/MEP pathway for isoprenoid precursor biosynthesis. The sequence is that of 4-hydroxy-3-methylbut-2-enyl diphosphate reductase from Geobacillus kaustophilus (strain HTA426).